Consider the following 998-residue polypeptide: RNA-directed RNA polymerase (998 aa).

Interaction with host mitochondria outer membrane stretches follow at residues 1 to 67 (MTLK…DKTK) and 233 to 250 (VRTS…RMIG). The segment at 1–400 (MTLKVILGEH…KPTMPRVHWP (400 aa)) is homomultimerization. The helical transmembrane segment at 17-34 (LLVGIATVSGCGAVVYCI) threads the bilayer. Positions 35-998 (SKFWGYGAIA…AQPQPSNNRK (964 aa)) are cytoplasmic. The tract at residues 91-282 (NGHAVSGAVR…LVYTIPQYVI (192 aa)) is capping. Aspartate 692 acts as the For RdRp/TNTase activity in catalysis. Residues 700-800 (IQKSINRAAK…MVLRLYGPTA (101 aa)) are homomultimerization. Residues 901–998 (AKQTRANPGT…AQPQPSNNRK (98 aa)) form a disordered region. Polar residues-rich tracts occupy residues 904-913 (TRANPGTSRP) and 947-961 (GKTN…TAGE). The span at 971 to 984 (KGPRGGKTNTRRTP) shows a compositional bias: basic residues.

It belongs to the nodaviridae RNA polymerase family. In terms of assembly, homododecamer. Forms 2 stacked rings of 35-nm in diameter, arranged in a crown-like structure at the opening of virus-induced replication vesicles. Interacts with protein B2. The cofactor is Mn(2+).

It is found in the host mitochondrion outer membrane. The enzyme catalyses RNA(n) + a ribonucleoside 5'-triphosphate = RNA(n+1) + diphosphate. With respect to regulation, drastically inhibited by phosphonoacetic acid. Only slightly inhibited by gliotoxin. RNA-dependent RNA polymerase, which replicates the viral genome composed of 2 RNA segments, RNA1 and RNA2. Does not need an exogenous primer. Also possesses a terminal nucleotidyl transferase (TNTase) activity. The TNTase catalyzes the addition of nucleotide to the 3'-end of plus- and minus-stranded RNAs, probably to repair the 3'-end nucleotide loss. Forms the open necked connection to the cytosol of the virus-induced replication vesicles. Mediates viral RNA1 recruitment. The protein is RNA-directed RNA polymerase of Costelytra zealandica (Greater wax moth).